The following is a 646-amino-acid chain: Long-chain fatty acid transport protein 1 (646 aa).

The Extracellular segment spans residues 1-13 (MRAPGAGAASVVS). The chain crosses the membrane as a helical span at residues 14–34 (LALLWLLGLPWTWSAAAALGV). Residues 35–646 (YVGSGGWRFL…TRICSGAFAL (612 aa)) are Cytoplasmic-facing. The tract at residues 191–475 (EVSGHLGKSL…YVSESATSKK (285 aa)) is sufficient for oligomerization. Residue 246–257 (YIYTSGTTGLPK) participates in AMP binding.

The protein belongs to the ATP-dependent AMP-binding enzyme family. In terms of assembly, self-associates. May function as a homodimer. Interacts with EPRS1; mediates the translocation of SLC27A1 from the cytoplasm to the plasma membrane thereby increasing the uptake of long-chain fatty acids. Interacts with DGAT2 and this interaction is enhanced in the presence of ZFYVE1. In terms of tissue distribution, highest levels of expression are detected in muscle and adipose tissue small, intermediate levels in small intestine, and barely detectable in liver. Expressed in brain gray matter.

The protein resides in the cell membrane. Its subcellular location is the endomembrane system. It is found in the cytoplasm. The catalysed reaction is a fatty acid(in) = a fatty acid(out). It catalyses the reaction (9Z)-octadecenoate(out) = (9Z)-octadecenoate(in). It carries out the reaction hexadecanoate(out) = hexadecanoate(in). The enzyme catalyses (9Z,12Z)-octadecadienoate(out) = (9Z,12Z)-octadecadienoate(in). The catalysed reaction is (5Z,8Z,11Z,14Z)-eicosatetraenoate(out) = (5Z,8Z,11Z,14Z)-eicosatetraenoate(in). It catalyses the reaction a long-chain fatty acid + ATP + CoA = a long-chain fatty acyl-CoA + AMP + diphosphate. It carries out the reaction (5Z,8Z,11Z,14Z)-eicosatetraenoate + ATP + CoA = (5Z,8Z,11Z,14Z)-eicosatetraenoyl-CoA + AMP + diphosphate. The enzyme catalyses a very long-chain fatty acid + ATP + CoA = a very long-chain fatty acyl-CoA + AMP + diphosphate. The catalysed reaction is tetracosanoate + ATP + CoA = tetracosanoyl-CoA + AMP + diphosphate. Its activity is regulated as follows. Inhibited by Triacsin C. Mediates the import of long-chain fatty acids (LCFA) into the cell by facilitating their transport at the plasma membrane. Also functions as an acyl-CoA ligase catalyzing the ATP-dependent formation of fatty acyl-CoA using LCFA and very-long-chain fatty acids (VLCFA) as substrates, which prevents fatty acid efflux from cells and might drive more fatty acid uptake. May act directly as a bona fide transporter, or alternatively, in a cytoplasmic or membrane-associated multimeric protein complex to trap and draw fatty acids towards accumulation. Plays a pivotal role in regulating available LCFA substrates from exogenous sources in tissues undergoing high levels of beta-oxidation or triglyceride synthesis. May be involved in regulation of cholesterol metabolism. Probably involved in fatty acid transport across the blood barrier. This Homo sapiens (Human) protein is Long-chain fatty acid transport protein 1.